The following is a 105-amino-acid chain: Delta-hexatoxin-Mg1a (105 aa).

A signal peptide spans 1 to 18 (MKTLVIACVALVLVVVHG). A propeptide spanning residues 19–60 (EVIEEVNEKQLQESVEEKYSLLQRLEKLDEAITAEENRNSRV) is cleaved from the precursor. 4 cysteine pairs are disulfide-bonded: Cys63–Cys77, Cys70–Cys82, Cys76–Cys93, and Cys78–Cys105.

It belongs to the neurotoxin 06 (delta-actx) family. In terms of tissue distribution, expressed by the venom gland.

The protein resides in the secreted. Its function is as follows. Selectively slows channel inactivation of mammalian Nav1.1/SCN1A, Nav1.3/SCN3A, and Nav1.6/SCN8A and shows higher affinity for insect Nav1/para channels (site 3). Induces tonic repetitive firing of nerve impulses in insect neurons accompanied by plateau potentials. This Macrothele gigas (Japanese funnel web spider) protein is Delta-hexatoxin-Mg1a.